The chain runs to 273 residues: Ethanolamine ammonia-lyase small subunit (273 aa).

The adenosylcob(III)alamin site is built by V164, E185, and C214.

Belongs to the EutC family. The basic unit is a heterodimer which dimerizes to form tetramers. The heterotetramers trimerize; 6 large subunits form a core ring with 6 small subunits projecting outwards. Adenosylcob(III)alamin serves as cofactor.

The protein resides in the bacterial microcompartment. The catalysed reaction is ethanolamine = acetaldehyde + NH4(+). It functions in the pathway amine and polyamine degradation; ethanolamine degradation. Its function is as follows. Catalyzes the deamination of various vicinal amino-alcohols to oxo compounds. Allows this organism to utilize ethanolamine as the sole source of nitrogen and carbon in the presence of external vitamin B12. The polypeptide is Ethanolamine ammonia-lyase small subunit (Pseudomonas aeruginosa (strain LESB58)).